A 630-amino-acid polypeptide reads, in one-letter code: Heat shock cognate 70 kDa protein 3 (630 aa).

Residues 611 to 630 form a disordered region; that stretch reads FYQGNNNPKPTTTTFNQDLD. Residues 615 to 630 are compositionally biased toward low complexity; sequence NNNPKPTTTTFNQDLD.

Belongs to the heat shock protein 70 family.

Functionally, may function in protein folding and assembly, and disassembly of protein complexes. This Dictyostelium discoideum (Social amoeba) protein is Heat shock cognate 70 kDa protein 3.